A 196-amino-acid polypeptide reads, in one-letter code: MTKRTASIKRQTTETTISLSLNLDGTGQADMCTGVRLFDHMLSQLAKHGLFDINISANGDDIHHLVEDVALTLGKAFNEALGERKGIVRMADATVPMDDSLASVALDLSGRGYAVMDLSFAKNDLTGFPTDLVRHFLETFAIEGRLNLHARILYGSNDHHKAEALFKALARALDKATSIDPRREGVAPSTKGMLEN.

Belongs to the imidazoleglycerol-phosphate dehydratase family.

The protein localises to the cytoplasm. The catalysed reaction is D-erythro-1-(imidazol-4-yl)glycerol 3-phosphate = 3-(imidazol-4-yl)-2-oxopropyl phosphate + H2O. It participates in amino-acid biosynthesis; L-histidine biosynthesis; L-histidine from 5-phospho-alpha-D-ribose 1-diphosphate: step 6/9. This chain is Imidazoleglycerol-phosphate dehydratase, found in Dehalococcoides mccartyi (strain CBDB1).